A 115-amino-acid chain; its full sequence is Immunoglobulin kappa variable 5-48 (115 aa).

Positions 1 to 20 are cleaved as a signal peptide; the sequence is MVSTPQFLVFLLFWIPASRG. Positions 21 to 43 are framework-1; the sequence is DILLTQSPAILSVSPGERVSFSC. The cysteines at positions 43 and 108 are disulfide-linked. The interval 44-54 is complementarity-determining-1; the sequence is RASQSIGTSIH. The tract at residues 55–69 is framework-2; it reads WYQQRTNGSPRLLIK. The segment at 70-76 is complementarity-determining-2; the sequence is YASESIS. Positions 77–108 are framework-3; that stretch reads GIPSRFSGSGSGTDFTLSINSVESEDIADYYC. Residues 109–115 form a complementarity-determining-3 region; sequence QQSNSWP.

The polypeptide is Immunoglobulin kappa variable 5-48 (Mus musculus (Mouse)).